We begin with the raw amino-acid sequence, 481 residues long: MSYIKKLRARLDSGEISAVELTKEYLAKIKEQDKRINSIITLCEAEALKEAEDADAIISAGKQGLLTGIPILHKDLFCTKGIRTTAASKMLDNFVAPYDSTVTKNCKDQGMVTLGKLNMDEFAMGSTNEYSYYGAVSNPWDLERVPGGSSGGSAAAVAAGFAPISTGSDTGGSVRQPASFCGLTAMKPSYGSTSRFGMVAFASSFDQAGIFGHYAEDVAIMLDAIAGECEFDSTCVGVKQNHFTQDLEKDISSKVIGVDESLIKDLPAQIQEAVSKTLDNFKKLGAEIKSVKVPDLKEALSTYYIITPAEAAANLARYDGIRYGYRNPEARDLDELYRKSRTDGFGAEVKRRIMIGNYVLASSQYDSYYNKAQQLRKVMTDQINQIFTQVDAIFMPASPSEAFKKGDKLDPVSAYLSDIYTIPANISGLPAIAFPIGFANNLPVGGQLMAKAFNDNILTQMVVQYQKHYGIEEFILQQARI.

Catalysis depends on charge relay system residues Lys-74 and Ser-149. Ser-173 functions as the Acyl-ester intermediate in the catalytic mechanism.

Belongs to the amidase family. GatA subfamily. As to quaternary structure, heterotrimer of A, B and C subunits.

The enzyme catalyses L-glutamyl-tRNA(Gln) + L-glutamine + ATP + H2O = L-glutaminyl-tRNA(Gln) + L-glutamate + ADP + phosphate + H(+). Its function is as follows. Allows the formation of correctly charged Gln-tRNA(Gln) through the transamidation of misacylated Glu-tRNA(Gln) in organisms which lack glutaminyl-tRNA synthetase. The reaction takes place in the presence of glutamine and ATP through an activated gamma-phospho-Glu-tRNA(Gln). This is Glutamyl-tRNA(Gln) amidotransferase subunit A from Francisella tularensis subsp. holarctica (strain FTNF002-00 / FTA).